The primary structure comprises 297 residues: MKLSKAVWALVLTVVTWASAFPAIRVGLDGYGVAGLSLSRLTVASVALAIAAGPLGVRRPRARDLPMIALCGATGMSAYQVLLNWGEVHVPAGTASLLIAIAPVFSVLLAAVFLGERMTWAQIAGSAVAISGAAVIAVAGGHARYTTSAWVVLAAAVVQGVYHFATKPLLARYTGLEVACYAMWAGTVFLLPLLPAMVHGFATAPVAATASTVYLGLLPSAIGFVSWGYAVARLSVASSTASLYLVPPVALVVAFVWLGEVPPPLALVGGALGIAGVMLINRRTLGRRREASTPGRR.

Transmembrane regions (helical) follow at residues 6–26, 32–52, 65–85, 95–115, 123–143, 150–170, 178–198, 212–232, and 249–269; these read AVWALVLTVVTWASAFPAIRV, GVAGLSLSRLTVASVALAIAA, LPMIALCGATGMSAYQVLLNW, ASLLIAIAPVFSVLLAAVFLG, IAGSAVAISGAAVIAVAGGHA, WVVLAAAVVQGVYHFATKPLL, VACYAMWAGTVFLLPLLPAMV, TVYLGLLPSAIGFVSWGYAVA, and VALVVAFVWLGEVPPPLALVG. EamA domains are found at residues 6–137 and 150–281; these read AVWA…AVIA and WVVL…MLIN.

Belongs to the EamA transporter family.

It is found in the cell membrane. In terms of biological role, probably involved in the export of terminal alkyne-containing amino acids, namely L-propargylglycine (Pra) and L-beta-ethynylserine, that are antibiotics synthesized by enzymes encoded in the same gene cluster. The polypeptide is Probable terminal-alkyne amino-acid exporter (Streptantibioticus cattleyicolor (strain ATCC 35852 / DSM 46488 / JCM 4925 / NBRC 14057 / NRRL 8057) (Streptomyces cattleya)).